A 757-amino-acid polypeptide reads, in one-letter code: Xaa-Pro dipeptidyl-peptidase (757 aa).

Active-site charge relay system residues include serine 348, aspartate 468, and histidine 498.

It belongs to the peptidase S15 family. As to quaternary structure, homodimer.

It is found in the cytoplasm. It carries out the reaction Hydrolyzes Xaa-Pro-|- bonds to release unblocked, N-terminal dipeptides from substrates including Ala-Pro-|-p-nitroanilide and (sequentially) Tyr-Pro-|-Phe-Pro-|-Gly-Pro-|-Ile.. Functionally, removes N-terminal dipeptides sequentially from polypeptides having unsubstituted N-termini provided that the penultimate residue is proline. The chain is Xaa-Pro dipeptidyl-peptidase from Streptococcus pneumoniae (strain ATCC BAA-255 / R6).